The primary structure comprises 331 residues: C-type lectin domain family 4 member K (331 aa).

The Cytoplasmic portion of the chain corresponds to 1-41; sequence MPEAEMKEEAPEAHFTVDKQNISLWPREPPPKQDLSPVLRK. The chain crosses the membrane as a helical; Signal-anchor for type II membrane protein span at residues 42–62; it reads PLCICVAFTCLALVLVTSIVL. Over 63–331 the chain is Extracellular; that stretch reads QAVFYPRLMG…CKRPYVQTTE (269 aa). N-linked (GlcNAc...) asparagine glycans are attached at residues asparagine 90 and asparagine 116. Residues 106 to 197 are a coiled coil; sequence DDAEVQMQIV…LKQQSDILEM (92 aa). One can recognise a C-type lectin domain in the interval 205–323; sequence FSGNFYYFSR…CDNTFLFICK (119 aa). Disulfide bonds link cysteine 226/cysteine 322 and cysteine 298/cysteine 314.

As to quaternary structure, homotrimer. Expressed by Langerhans cells. Expressed in dendritic cells and by scattered cells in lymph nodes and spleen. Also detected in some non-lymphoid tissues such as lung, liver and heart.

The protein resides in the membrane. Functionally, calcium-dependent lectin displaying mannose-binding specificity. Induces the formation of Birbeck granules (BGs); is a potent regulator of membrane superimposition and zippering. Binds to sulfated as well as mannosylated glycans, keratan sulfate (KS) and beta-glucans. Facilitates uptake of antigens and is involved in the routing and/or processing of antigen for presentation to T cells. This is C-type lectin domain family 4 member K (Cd207) from Mus musculus (Mouse).